The sequence spans 156 residues: Small ribosomal subunit protein uS7 (156 aa).

This sequence belongs to the universal ribosomal protein uS7 family. Part of the 30S ribosomal subunit. Contacts proteins S9 and S11.

In terms of biological role, one of the primary rRNA binding proteins, it binds directly to 16S rRNA where it nucleates assembly of the head domain of the 30S subunit. Is located at the subunit interface close to the decoding center, probably blocks exit of the E-site tRNA. The protein is Small ribosomal subunit protein uS7 of Desulfosudis oleivorans (strain DSM 6200 / JCM 39069 / Hxd3) (Desulfococcus oleovorans).